The sequence spans 419 residues: MHKLIIHGGTPLKGSINISGAKNAVLPIMAASILTDKLHITNVPKLTDVSTMKDLLRSHGADIEIIEHQDEFELIIDTKNINNFTADYEIVRKMRASIWVLGPLLTKYGKAKVSLPGGCAIGARQVDLHIAVLKAMGAEIEIEDGYINASSKGRLKGPHFVFDKVSVGATINAILAAVLAEGETVLFNCGREPEIVDLCNCLITMGADIAGIGTSEITIKGKDSLNKASYKVLSDRIEAGTYMFAAAITKGDVKICGIDYHIVENIALKLIETGIKVVPINNGVQVTYEGKLNSVDLETNPYPGFATDLQAQFMSLMTLSSGVSMITENIFENRFMHVPELCRMGADIVVRGNKAVVRGVEMLKGAEVMASDLRASVSLILAGLSTNSKTVLHRIYHLDRGFQDLEKKLSNCGADIKRV.

22 to 23 (KN) is a phosphoenolpyruvate binding site. Residue arginine 95 participates in UDP-N-acetyl-alpha-D-glucosamine binding. Cysteine 119 serves as the catalytic Proton donor. 2-(S-cysteinyl)pyruvic acid O-phosphothioketal is present on cysteine 119. Residues 164–167 (KVSV), aspartate 308, and isoleucine 330 contribute to the UDP-N-acetyl-alpha-D-glucosamine site.

It belongs to the EPSP synthase family. MurA subfamily.

It localises to the cytoplasm. The enzyme catalyses phosphoenolpyruvate + UDP-N-acetyl-alpha-D-glucosamine = UDP-N-acetyl-3-O-(1-carboxyvinyl)-alpha-D-glucosamine + phosphate. The protein operates within cell wall biogenesis; peptidoglycan biosynthesis. Cell wall formation. Adds enolpyruvyl to UDP-N-acetylglucosamine. In Rickettsia peacockii (strain Rustic), this protein is UDP-N-acetylglucosamine 1-carboxyvinyltransferase.